Here is a 393-residue protein sequence, read N- to C-terminus: Probable acetyl-CoA acetyltransferase (393 aa).

The Acyl-thioester intermediate role is filled by C88. Catalysis depends on proton acceptor residues H349 and C379.

It belongs to the thiolase-like superfamily. Thiolase family.

It catalyses the reaction 2 acetyl-CoA = acetoacetyl-CoA + CoA. The chain is Probable acetyl-CoA acetyltransferase (fadA4) from Mycobacterium leprae (strain TN).